Consider the following 975-residue polypeptide: MSEQERIQECLRKEIRSLLISTKDGLTPQQLEKEYLLMVGNHLPLRILGYRSTMELVLDMPDVVSVCPCGDGTVILKAIPDESTKGIANLVAKQKSNHKVRNSMQKGRASVCSGPSSRRRVPYRGRVPPILPAVVKSELKDLLALSPVLLSDFENAFANRFGRSFQYVQYGFLSMFEVLNAASDVISVEQTRAGSLLTLKKSVSEEKQRGWPAAKGKIFTQPFRMKQQGSYPIGFPVAKACFSQPTSNMEPPKQILGMERNSRSNVMETSRLNHSEKLNQLALTLQSWVVSHYGFNGSFSSAKKHKAMYTLRKFTENLMVCCLFNEYMLIFKEQLSPKKLGFLNVIELVGALSDILHVEFREGEQDLLVFDADMKPLASVQPDKKTEAKACVSSPPRNSLSTAVIKETTWDCPSKNHKEPEQKIFKKPNLVVKPLQLQVEINKSQLSLAVANHDIPPDAVRDKKLCRLPPLDTSTLVGVFVEYILSPSQFYIRIYSRDSSELLEDMMIEMRRCYSNQLVSDRYAMPECFIQPGHLCCVRISEDKWWYRVIIHRILGKQEVEVFYPDFGNIGTVQKSSLRFLKCCYTKLPAQAIPCSLAWVRPVEEHWTSRAVLQFQKLCGLKPLVGVVDEYVDGILNIFLCDTSSNEDVYFHHVLRTEGHAIVCRENVPSKGFRDLNPLALYTKSSVTPEDIVLKELGYHSQQHYFNEDREISPQSKESDLYTLDEIPTGMPYLESVTIGDDIWDENWLPLQAKMGKESDAASHLFTSSLGGKKPYPSCKEIPQKDWCFSTPKDIWDDSWQPSGLVNGMKVEVQIPEGLGAQEKHIDTTRIQKQSNVKSASDSPALPKLEEFYISLIQSQQSAEGSQFEPSNIQTPPKQIQLSSTPTLVNSGSVEGSPESLENEDFSSSSAITVFKDTSQGAVDQLSLILSPEHQISQKFYIPRSTATAALGAAARLATSNSLLHWYPSVKKMET.

3 HTH OST-type domains span residues 7–80 (IQEC…KAIP), 127–202 (VPPI…LKKS), and 299–373 (FSSA…FDAD). A Tudor domain is found at 529–588 (FIQPGHLCCVRISEDKWWYRVIIHRILGKQEVEVFYPDFGNIGTVQKSSLRFLKCCYTKL). Disordered regions lie at residues 820 to 843 (GAQE…ASDS) and 864 to 905 (EGSQ…ENED). Composition is skewed to polar residues over residues 831 to 842 (IQKQSNVKSASD) and 864 to 894 (EGSQ…SGSV). The residue at position 891 (serine 891) is a Phosphoserine.

Belongs to the TDRD5 family.

It is found in the cytoplasm. Its function is as follows. Required during spermiogenesis to participate in the repression transposable elements and prevent their mobilization, which is essential for the germline integrity. Probably acts via the piRNA metabolic process, which mediates the repression of transposable elements during meiosis by forming complexes composed of piRNAs and Piwi proteins and govern the methylation and subsequent repression of transposons. Required for chromatoid body (CB) assembly. The sequence is that of Tudor domain-containing protein 5 (TDRD5) from Bos taurus (Bovine).